A 257-amino-acid polypeptide reads, in one-letter code: Very long chain fatty acid elongase F (257 aa).

7 helical membrane-spanning segments follow: residues Ile-10–Val-30, Ile-55–Leu-75, Leu-98–Val-118, Phe-135–Phe-155, Cys-158–Ser-178, Ile-191–Ala-211, and Leu-221–Tyr-241.

Belongs to the ELO family. Highly expressed in females. Little or no expression detected in males.

It localises to the endoplasmic reticulum membrane. It catalyses the reaction a very-long-chain acyl-CoA + malonyl-CoA + H(+) = a very-long-chain 3-oxoacyl-CoA + CO2 + CoA. It functions in the pathway lipid metabolism; fatty acid biosynthesis. In terms of biological role, condensing enzyme that elongates saturated and monounsaturated very long chain fatty acids, to yield products up to 30 carbons in length. May also elongate diunsaturated fatty acids. Important for courtship behavior where it probably has a role in female pheromone biosynthesis. The polypeptide is Very long chain fatty acid elongase F (Drosophila melanogaster (Fruit fly)).